A 151-amino-acid chain; its full sequence is D-aminoacyl-tRNA deacylase (151 aa).

The Gly-cisPro motif, important for rejection of L-amino acids motif lies at 142-143; sequence GP.

Belongs to the DTD family. Homodimer.

The protein resides in the cytoplasm. It carries out the reaction glycyl-tRNA(Ala) + H2O = tRNA(Ala) + glycine + H(+). It catalyses the reaction a D-aminoacyl-tRNA + H2O = a tRNA + a D-alpha-amino acid + H(+). In terms of biological role, an aminoacyl-tRNA editing enzyme that deacylates mischarged D-aminoacyl-tRNAs. Also deacylates mischarged glycyl-tRNA(Ala), protecting cells against glycine mischarging by AlaRS. Acts via tRNA-based rather than protein-based catalysis; rejects L-amino acids rather than detecting D-amino acids in the active site. By recycling D-aminoacyl-tRNA to D-amino acids and free tRNA molecules, this enzyme counteracts the toxicity associated with the formation of D-aminoacyl-tRNA entities in vivo and helps enforce protein L-homochirality. The sequence is that of D-aminoacyl-tRNA deacylase from Psychrobacter arcticus (strain DSM 17307 / VKM B-2377 / 273-4).